Reading from the N-terminus, the 241-residue chain is Leucyl/phenylalanyl-tRNA--protein transferase (241 aa).

Belongs to the L/F-transferase family.

It is found in the cytoplasm. It catalyses the reaction N-terminal L-lysyl-[protein] + L-leucyl-tRNA(Leu) = N-terminal L-leucyl-L-lysyl-[protein] + tRNA(Leu) + H(+). The catalysed reaction is N-terminal L-arginyl-[protein] + L-leucyl-tRNA(Leu) = N-terminal L-leucyl-L-arginyl-[protein] + tRNA(Leu) + H(+). The enzyme catalyses L-phenylalanyl-tRNA(Phe) + an N-terminal L-alpha-aminoacyl-[protein] = an N-terminal L-phenylalanyl-L-alpha-aminoacyl-[protein] + tRNA(Phe). Functions in the N-end rule pathway of protein degradation where it conjugates Leu, Phe and, less efficiently, Met from aminoacyl-tRNAs to the N-termini of proteins containing an N-terminal arginine or lysine. This is Leucyl/phenylalanyl-tRNA--protein transferase from Colwellia psychrerythraea (strain 34H / ATCC BAA-681) (Vibrio psychroerythus).